Here is a 221-residue protein sequence, read N- to C-terminus: MKTPGHQRVKTARRRTAASTRWLERQLNDPYVQKAQAEGYRSRAAFKLIELDERFSLLKNARRIIDLGIAPGGWSQVARKKAPQAKIVGIDLLEAAPIEGVTIFQNDFTDPEAQKKLIEALGGAADLVLSDMAANTIGHAQTDHLRTMALVEEAAVFASETLREGGSFVAKVLAGGADKDLVALLKRLFGQVKHAKPPASRRESSEWYVIAQNFRGEAYQG.

S-adenosyl-L-methionine-binding residues include Gly72, Trp74, Asp91, Asp107, and Asp131. Lys171 (proton acceptor) is an active-site residue.

The protein belongs to the class I-like SAM-binding methyltransferase superfamily. RNA methyltransferase RlmE family.

It localises to the cytoplasm. It catalyses the reaction uridine(2552) in 23S rRNA + S-adenosyl-L-methionine = 2'-O-methyluridine(2552) in 23S rRNA + S-adenosyl-L-homocysteine + H(+). Functionally, specifically methylates the uridine in position 2552 of 23S rRNA at the 2'-O position of the ribose in the fully assembled 50S ribosomal subunit. The protein is Ribosomal RNA large subunit methyltransferase E of Zymomonas mobilis subsp. mobilis (strain ATCC 31821 / ZM4 / CP4).